We begin with the raw amino-acid sequence, 443 residues long: Histidine--tRNA ligase (443 aa).

The segment covering 1–20 (MTESEKKQQKPQKAKAEKFK) has biased composition (basic and acidic residues). The disordered stretch occupies residues 1 to 21 (MTESEKKQQKPQKAKAEKFKA).

Belongs to the class-II aminoacyl-tRNA synthetase family. Homodimer.

The protein resides in the cytoplasm. The enzyme catalyses tRNA(His) + L-histidine + ATP = L-histidyl-tRNA(His) + AMP + diphosphate + H(+). The chain is Histidine--tRNA ligase from Corynebacterium jeikeium (strain K411).